The primary structure comprises 33 residues: Actin (33 aa).

It belongs to the actin family.

Its subcellular location is the cytoplasm. It is found in the cytoskeleton. It catalyses the reaction ATP + H2O = ADP + phosphate + H(+). Functionally, actins are highly conserved proteins that are involved in various types of cell motility and are ubiquitously expressed in all eukaryotic cells. This Dictyocaulus viviparus (Bovine lungworm) protein is Actin.